The chain runs to 456 residues: Crinkler effector protein 2 (456 aa).

An N-terminal signal peptide occupies residues 1-17 (MVKLVCAIVGVAGSAFP). Residues 18–54 (VDTDASQLVGDLKKAIKAENAMTFTGDAKDLQLFLAK) form an LQLFLAK domain region. The interval 55-136 (QPVDDESGKE…NMELPSSEQI (82 aa)) is DWL domain. Residues 137–143 (HVLVVVP) carry the HVLVXXP motif motif. An N-linked (GlcNAc...) asparagine glycan is attached at Asn-338.

The protein belongs to the Crinkler effector family.

Its subcellular location is the secreted. It is found in the host nucleus. Secreted effector that effector that induces cell death when expressed in host plants. Induces the expression of defense response genes in tomato. In Phytophthora infestans (Potato late blight agent), this protein is Crinkler effector protein 2.